Consider the following 370-residue polypeptide: MAESLFYQLAAAGVQGLTPYQPGKPIEELEREYGVRGAVKLASNENPLGPSPMAIDAIYGVLGESGRYPDGNGFALKTALSQCLGIPANQITLGNGSSDLLEFAARVLISPEHEVIYSQYCFALYPLLIQILGAKGHAVPAKGFGHDLEAMVKAVNSQTRLVYIANPNNPTGTWLHSDELEAFLAALPEHVLVVLDEAYYEYVNEAQYPYSLAWMSRYPNLMITRTFSKIYGLAGLRIGYGVSHPDLADLMNRVRPPFNVNSLALAAATAALQDHDHLQRSRKVNQAGMAQLTMAFTALGLDYIPSVANFVTVDVKQSGDKVYENLLRHGVIVRPMTGYGLPRHVRVTVGREEENARFIQVLETVLEEFR.

At lysine 229 the chain carries N6-(pyridoxal phosphate)lysine.

Belongs to the class-II pyridoxal-phosphate-dependent aminotransferase family. Histidinol-phosphate aminotransferase subfamily. In terms of assembly, homodimer. Pyridoxal 5'-phosphate is required as a cofactor.

The catalysed reaction is L-histidinol phosphate + 2-oxoglutarate = 3-(imidazol-4-yl)-2-oxopropyl phosphate + L-glutamate. It participates in amino-acid biosynthesis; L-histidine biosynthesis; L-histidine from 5-phospho-alpha-D-ribose 1-diphosphate: step 7/9. This is Histidinol-phosphate aminotransferase 1 from Nitrosococcus oceani (strain ATCC 19707 / BCRC 17464 / JCM 30415 / NCIMB 11848 / C-107).